The sequence spans 196 residues: Endoribonuclease YbeY (196 aa).

The Zn(2+) site is built by His120, His124, and His130.

The protein belongs to the endoribonuclease YbeY family. Requires Zn(2+) as cofactor.

It localises to the cytoplasm. Single strand-specific metallo-endoribonuclease involved in late-stage 70S ribosome quality control and in maturation of the 3' terminus of the 16S rRNA. The polypeptide is Endoribonuclease YbeY (Corynebacterium diphtheriae (strain ATCC 700971 / NCTC 13129 / Biotype gravis)).